A 116-amino-acid polypeptide reads, in one-letter code: Ferredoxin (116 aa).

4Fe-4S ferredoxin-type domains lie at 2–31 (TYVV…EGER) and 35–64 (FMLV…PESP). Positions 9 and 17 each coordinate [3Fe-4S] cluster. [4Fe-4S] cluster is bound by residues Cys-21, Cys-44, Cys-47, and Cys-50. Cys-54 provides a ligand contact to [3Fe-4S] cluster.

It depends on [4Fe-4S] cluster as a cofactor. Requires [3Fe-4S] cluster as cofactor.

Its function is as follows. Ferredoxins are iron-sulfur proteins that transfer electrons in a wide variety of metabolic reactions. The sequence is that of Ferredoxin (fdxA) from Rickettsia conorii (strain ATCC VR-613 / Malish 7).